The primary structure comprises 185 residues: UPF0397 protein lhv_0999 (185 aa).

The next 5 membrane-spanning stretches (helical) occupy residues 11 to 31, 45 to 65, 72 to 92, 111 to 131, and 145 to 165; these read VVAM…TSIP, FLAL…GFIG, IMYG…GLII, ILLF…VVAP, and VFVQ…VVGT.

Belongs to the UPF0397 family.

The protein localises to the cell membrane. The protein is UPF0397 protein lhv_0999 of Lactobacillus helveticus (strain DPC 4571).